A 311-amino-acid polypeptide reads, in one-letter code: MIVTGVLLFILLELFAQGSQAFKALDPEEAWYVYERCHEDHLPSGPNRETYLKTWKFWKLEPNDAVTHCYVKCTLAGLQMYDEKTNTFKPETVPVQHEAYKSFTEVESSKVNELQQALSSLNAGSGSCAEVFNAYLPVHNKYVGVSRKIYHGTVDSVAKIYEAKPEIKKQEESFFAYCAKKALGANGKEGYTKLRDYELADSAEFRNAMDCVFRGFRYMDDSGLKVDEVVRDFNLINKSDLEPEVRSVLASCTGTQAYDYYSCLLNSPVKEDFRNAFYFHELRSANYGYLAMGKVYEGPEKVKEELKKLNY.

Positions 1 to 21 (MIVTGVLLFILLELFAQGSQA) are cleaved as a signal peptide. 4 disulfides stabilise this stretch: Cys37–Cys73, Cys69–Cys128, Cys178–Cys211, and Cys252–Cys263.

It belongs to the PBP/GOBP family.

Its subcellular location is the secreted. Modulates blood feeding of female mosquitoes on vertebrate species by binding and sequestering different mediators involved in the host response. Binds leukotriene C4 and U-46619, a stable analog of thromboxane A2. Inhibits agonist-induced platelet aggregation. Exhibits vasodilating activity. The chain is Long form salivary protein D7L1 from Anopheles gambiae (African malaria mosquito).